The following is a 291-amino-acid chain: MDRRISGSTQLLGLIGDPVAHSLSPAMHNAALAAMGEDYCYVPFPVAAERLAVAVAGLAAIGVRGFNVTIPHKQAILPLLSQVEARAAAVGAVNTVYALPEGGWGGTNTDIDGFVQPLLGLEKGIPTLILGSGGAARAAIQGCLELGLGPVRVAGRSPEKLRALQQTWPQVETLSWAELDRHLAETRLLVNTTPVGMHKPGSLAELSPLSWEQLRLLPAGATVYDLVYVPDPTPLLRMAAELGHTPIGGLEMLIHQGAKALSLWLGGKLVPVEVMRQAARQQLAQIGDPNS.

Shikimate is bound by residues 22–24 (SLS) and T69. Residue K73 is the Proton acceptor of the active site. 2 residues coordinate shikimate: N94 and D110. NADP(+) is bound by residues 131 to 135 (GSGGA) and L226. Y228 is a binding site for shikimate. NADP(+) is bound at residue G249.

This sequence belongs to the shikimate dehydrogenase family. In terms of assembly, homodimer.

The enzyme catalyses shikimate + NADP(+) = 3-dehydroshikimate + NADPH + H(+). It functions in the pathway metabolic intermediate biosynthesis; chorismate biosynthesis; chorismate from D-erythrose 4-phosphate and phosphoenolpyruvate: step 4/7. Involved in the biosynthesis of the chorismate, which leads to the biosynthesis of aromatic amino acids. Catalyzes the reversible NADPH linked reduction of 3-dehydroshikimate (DHSA) to yield shikimate (SA). The chain is Shikimate dehydrogenase (NADP(+)) from Synechococcus sp. (strain JA-3-3Ab) (Cyanobacteria bacterium Yellowstone A-Prime).